The primary structure comprises 146 residues: MGRFIFVSFGLLVVFLSLSGTGADCPSDWSSYDLYCYRVFQEKKNWEDAEKFCRQQHTDSHLVSFDSSEEADFVASKTFPVLNYDLVWIGLGSVWNACKLQWSDGTELKYNAWSAESECITSKSIDNQWFTRSCSQTYPFVCKFQA.

The N-terminal stretch at 1–23 (MGRFIFVSFGLLVVFLSLSGTGA) is a signal peptide. 3 disulfide bridges follow: cysteine 25/cysteine 36, cysteine 53/cysteine 142, and cysteine 119/cysteine 134. Residues 32–143 (YDLYCYRVFQ…CSQTYPFVCK (112 aa)) enclose the C-type lectin domain.

This sequence belongs to the snaclec family. In terms of assembly, heteromultimer; disulfide-linked. As to expression, expressed by the venom gland.

The protein localises to the secreted. In terms of biological role, interferes with one step of hemostasis (modulation of platelet aggregation, or coagulation cascade, for example). The chain is Snaclec stejaggregin-B subunit beta-1 from Trimeresurus stejnegeri (Chinese green tree viper).